The primary structure comprises 806 residues: MIPVAEFKQFTEQQPAFKVLKPWWDVLAEYITYAMLMIGVFGCTLQVTQDKIICLPNHTSADVVSQITCQEFTQQSSASNDSDLETTVPPPTATSSPPREMSGLRNNLDLQQYSFINQMCYETALHWYAKYFPYLVVIHTLIFIICGNFWFKFPGTSSKIEHFISILGKCFDSPWTTRALSEVSGESSQEKPNQERSIDRELSKPNFEEGSPATADLPIPDKLVAETSSASALDKKEGEQAKALFEKVKKFRHHVEEGDLLYSMYMRQTVLKVCKFVLITIYNAVLVGKIHFIVPCSVHTEDMTGYNSFCCNHTKAHLFSKLAISYLCFLGVYGLTCFYTLYWLFRRPLKEYSFRSVREETGIGDIPDVKNDFAFVLHLVDQYDSLYSKRFAVFLSEVSESRLRQLNLNHEWPADKLRQKLQHTPEGRLELHLFKLPGLPDTVFEVAEMESLKLEMVNEALIPPLVSKLVRLEELSLLNCTAKVQHASMAYLRDHLRILQVKFDDIKEIPLWIFGLRALEELHLFGWLSQDLSKNPALESLRELKSLKVLTIKSNLSKIPATVADVAGHLQKFSIHNDGTKLLTLNALKRLVLVKELELVRCELERIPHAVFSLTNLQVLDLKENTLHTIEEIISLQHCRKLSVLRLWHNQIAYIPDHIRKLKGLEELSLNRNKILVIPSQLFLCNKLRHLDLSFNEIRELPPEIGVLQLLQYLGLSGNFLEDLPTELFFCQKLKTLKLGQNRLASLSPKVGSLVCLVKLELKGNRMDMLPPEIGNCLSLKRSGLNVESLLFDTLPVDVRDKFKED.

Topologically, residues Met1–Pro22 are cytoplasmic. A helical transmembrane segment spans residues Trp23–Cys43. Over Thr44–Lys130 the chain is Extracellular. Cys54 and Cys311 form a disulfide bridge. Asn57 and Asn80 each carry an N-linked (GlcNAc...) asparagine glycan. Residues Gln75–Leu104 form a disordered region. The chain crosses the membrane as a helical span at residues Tyr131 to Phe151. Residues Lys152 to Lys275 are Cytoplasmic-facing. Positions Glu182–Leu217 are disordered. The segment covering Ser188–Phe207 has biased composition (basic and acidic residues). Residues Phe276–Cys296 form a helical membrane-spanning segment. At Ser297–Ala323 the chain is on the extracellular side. N-linked (GlcNAc...) asparagine glycosylation is present at Asn312. The chain crosses the membrane as a helical span at residues Ile324–Leu344. The Cytoplasmic portion of the chain corresponds to Phe345–Asp806. 9 LRR repeats span residues His569–Lys589, Leu593–Leu614, Asn616–Gln637, Lys641–Leu662, Gly664–Cys685, Lys687–Leu708, Leu710–Cys731, Lys733–Leu754, and Cys756–Cys777.

It belongs to the LRRC8 family. Heterohexamer; oligomerizes with other LRRC8 proteins (lrrc8a, lrrc8c, lrrc8d and/or lrrc8b) to form a heterohexamer. Detected in a channel complex that contains lrrc8a, lrrc8c and lrrc8e. In vivo, the subunit composition may depend primarily on expression levels, and heterooligomeric channels containing various proportions of the different LRRC8 proteins may coexist.

The protein resides in the cell membrane. It is found in the endoplasmic reticulum membrane. The protein localises to the lysosome membrane. It catalyses the reaction chloride(in) = chloride(out). The enzyme catalyses iodide(out) = iodide(in). It carries out the reaction taurine(out) = taurine(in). The catalysed reaction is 2',3'-cGAMP(out) = 2',3'-cGAMP(in). Non-essential component of the volume-regulated anion channel (VRAC, also named VSOAC channel), an anion channel required to maintain a constant cell volume in response to extracellular or intracellular osmotic changes. The VRAC channel conducts iodide better than chloride and can also conduct organic osmolytes like taurine. Mediates efflux of amino acids, such as aspartate, in response to osmotic stress. The VRAC channel also mediates transport of immunoreactive cyclic dinucleotide GMP-AMP (2'-3'-cGAMP), an immune messenger produced in response to DNA virus in the cytosol. Channel activity requires lrrc8a plus at least one other family member (lrrc8b, lrrc8c, lrrc8d or lrrc8e); channel characteristics depend on the precise subunit composition. Also plays a role in lysosome homeostasis by forming functional lysosomal VRAC channels in response to low cytoplasmic ionic strength condition: lysosomal VRAC channels are necessary for the formation of large lysosome-derived vacuoles, which store and then expel excess water to maintain cytosolic water homeostasis. This is Volume-regulated anion channel subunit LRRC8E from Xenopus laevis (African clawed frog).